A 196-amino-acid chain; its full sequence is Probable molybdenum cofactor guanylyltransferase (196 aa).

GTP-binding positions include 7–9 (LAG), Lys19, Asp68, and Asp93. Residue Asp93 coordinates Mg(2+).

This sequence belongs to the MobA family. It depends on Mg(2+) as a cofactor.

It is found in the cytoplasm. It carries out the reaction Mo-molybdopterin + GTP + H(+) = Mo-molybdopterin guanine dinucleotide + diphosphate. Its function is as follows. Transfers a GMP moiety from GTP to Mo-molybdopterin (Mo-MPT) cofactor (Moco or molybdenum cofactor) to form Mo-molybdopterin guanine dinucleotide (Mo-MGD) cofactor. This chain is Probable molybdenum cofactor guanylyltransferase, found in Pyrococcus furiosus (strain ATCC 43587 / DSM 3638 / JCM 8422 / Vc1).